Here is a 385-residue protein sequence, read N- to C-terminus: tRNA N6-adenosine threonylcarbamoyltransferase (385 aa).

A divalent metal cation contacts are provided by H140, H144, and Y161. Substrate-binding positions include 161-165, D193, G208, E212, and N314; that span reads YVSGG. Residue D343 participates in a divalent metal cation binding.

It belongs to the KAE1 / TsaD family. In terms of assembly, component of the EKC/KEOPS complex composed of at least BUD32, CGI121, GON7, KAE1 and PCC1; the whole complex dimerizes. The cofactor is a divalent metal cation.

Its subcellular location is the cytoplasm. The protein localises to the nucleus. The enzyme catalyses L-threonylcarbamoyladenylate + adenosine(37) in tRNA = N(6)-L-threonylcarbamoyladenosine(37) in tRNA + AMP + H(+). Component of the EKC/KEOPS complex that is required for the formation of a threonylcarbamoyl group on adenosine at position 37 (t(6)A37) in tRNAs that read codons beginning with adenine. The complex is probably involved in the transfer of the threonylcarbamoyl moiety of threonylcarbamoyl-AMP (TC-AMP) to the N6 group of A37. KAE1 likely plays a direct catalytic role in this reaction, but requires other protein(s) of the complex to fulfill this activity. The EKC/KEOPS complex also promotes both telomere uncapping and telomere elongation. The complex is required for efficient recruitment of transcriptional coactivators. In Eremothecium gossypii (strain ATCC 10895 / CBS 109.51 / FGSC 9923 / NRRL Y-1056) (Yeast), this protein is tRNA N6-adenosine threonylcarbamoyltransferase.